A 457-amino-acid polypeptide reads, in one-letter code: Tubulin gamma-2 chain (457 aa).

142–148 (AGGTGSG) is a binding site for GTP.

Belongs to the tubulin family. As to quaternary structure, interacts with Ote. As to expression, expressed in nurse cells and oocytes of developing egg chambers.

The protein localises to the cytoplasm. The protein resides in the cytoskeleton. It localises to the microtubule organizing center. Its subcellular location is the centrosome. It is found in the spindle. Tubulin is the major constituent of microtubules. The gamma chain is found at microtubule organizing centers (MTOC) such as the spindle poles or the centrosome, suggesting that it is involved in the minus-end nucleation of microtubule assembly. Required for oocyte activation and consequently for organization of the female meiotic spindle. Essential for centrosome organization and assembly of biastral mitotic spindles in embryos. Plays a role in stabilizing the augmin complex on the meiotic spindle. This is Tubulin gamma-2 chain (gammaTub37C) from Drosophila melanogaster (Fruit fly).